Reading from the N-terminus, the 55-residue chain is Chromatin protein Cren7 (55 aa).

It belongs to the Cren7 family. In terms of assembly, monomer. In terms of processing, methylated at multiple sites, to varying extents.

The protein localises to the chromosome. The protein resides in the cytoplasm. Its function is as follows. A chromatin protein, binds double-stranded DNA without sequence specificity. Constrains negative DNA supercoils. The chain is Chromatin protein Cren7 from Ignicoccus hospitalis (strain KIN4/I / DSM 18386 / JCM 14125).